Here is a 680-residue protein sequence, read N- to C-terminus: Major capsid protein (680 aa).

Position 1 is an N-acetylmethionine; by host N-acetyltransferase MAK3 (methionine 1).

The protein belongs to the totivirus major capsid protein family. Post-translationally, acetylation is necessary for viral assembly.

The protein resides in the virion. In terms of biological role, capsid protein self-assembles to form an icosahedral capsid with a T=2 symmetry, 40 nm in diameter, and consisting of 60 capsid proteins asymmetric dimers. The capsid encapsulates the genomic dsRNA and the polymerase and remains intact following cell entry to protect the dsRNA from degradation and to prevent unfavorable antiviral responses in the host cell during all the replication cycle of the virus. Nascent transcripts are transcribed within the structural confines of the virion and are extruded into the cytoplasm. Its function is as follows. Binds and removes 5' cap structures from cellular mRNA. Forms a covalent bond with m7GMP through His-154 of the capsid protein while releasing the mRNA body. This is Major capsid protein (gag) from Saccharomyces cerevisiae virus L-A (ScV-L-A).